Reading from the N-terminus, the 314-residue chain is MIEIEKPKIETVELNEDAKYGKFVIEPLERGYGTTLGNSLRRILLSSLPGAAVTAIQIDGVLHEFSTVEGVVEDVTTIILNLKKLALKIYSEEEKTLEIDVQGEGIVTAADITHDSDVEILNPDLHIATLAKDAHFRVRLTAKRGRGYTPADANKSEDQPIGVIPIDSIYTPVSRVTYQVEKTRVGQVANYDKLTLDVWTDGSIGPKEAISLGAKILTEHLNIFVGLTDEAQNAEIMVEKEEDQKEKVLEMTIEELDLSVRSYNCLKRAGINTVQELANKTEEDMMKVRNLGRKSLEEVKHKLEELGLGLRKDD.

Residues 1 to 228 (MIEIEKPKIE…EHLNIFVGLT (228 aa)) are alpha N-terminal domain (alpha-NTD). Residues 245 to 314 (KEKVLEMTIE…ELGLGLRKDD (70 aa)) are alpha C-terminal domain (alpha-CTD).

The protein belongs to the RNA polymerase alpha chain family. As to quaternary structure, homodimer. The RNAP catalytic core consists of 2 alpha, 1 beta, 1 beta' and 1 omega subunit. When a sigma factor is associated with the core the holoenzyme is formed, which can initiate transcription.

It carries out the reaction RNA(n) + a ribonucleoside 5'-triphosphate = RNA(n+1) + diphosphate. In terms of biological role, DNA-dependent RNA polymerase catalyzes the transcription of DNA into RNA using the four ribonucleoside triphosphates as substrates. This Bacillus thuringiensis (strain Al Hakam) protein is DNA-directed RNA polymerase subunit alpha.